A 397-amino-acid polypeptide reads, in one-letter code: Lysophospholipid transporter LplT (397 aa).

Residues 1-17 (MSESVHTNTSLWSKGMK) lie on the Periplasmic side of the membrane. Residues 18-38 (AVIVAQFLSAFGDNALLFATL) form a helical membrane-spanning segment. Topologically, residues 39-52 (ALLKAQFYPEWSQP) are cytoplasmic. A helical membrane pass occupies residues 53–73 (ILQMVFVGAYILFAPFVGQVA). Topologically, residues 74 to 90 (DSFAKGRVMMFANGLKL) are periplasmic. Residues 91–111 (LGAASICFGINPFLGYTLVGV) form a helical membrane-spanning segment. Residues 112–144 (GAAAYSPAKYGILGELTTGSKLVKANGLMEAST) are Cytoplasmic-facing. Residues 145–165 (IAAILLGSVAGGVLADWHVLV) form a helical membrane-spanning segment. A topological domain (periplasmic) is located at residue A166. Residues 167 to 187 (LAACALAYGGAVVANIYIPKL) traverse the membrane as a helical segment. Residues 188–226 (AAARPGQSWNLINMTRSFLNACTSLWRNGETRFSLVGTS) are Cytoplasmic-facing. Residues 227–247 (LFWGAGVTLRFLLVLWVPVAL) form a helical membrane-spanning segment. The Periplasmic portion of the chain corresponds to 248–256 (GITDNATPT). A helical transmembrane segment spans residues 257–277 (YLNAMVAIGIVVGAGAAAKLV). Topologically, residues 278–280 (TLE) are cytoplasmic. The helical transmembrane segment at 281–301 (TVSRCMPAGILIGVVVLIFSL) threads the bilayer. The Periplasmic segment spans residues 302–304 (QHE). The chain crosses the membrane as a helical span at residues 305 to 325 (LLPAYALLMLIGVMGGFFVVP). The Cytoplasmic segment spans residues 326 to 343 (LNALLQERGKKSVGAGNA). Residues 344 to 364 (IAVQNLGENSAMLLMLGIYSL) form a helical membrane-spanning segment. Residues 365-366 (AV) lie on the Periplasmic side of the membrane. A helical transmembrane segment spans residues 367–387 (MIGIPVVPIGIGFGALFALAI). Over 388 to 397 (TALWIWQRRH) the chain is Cytoplasmic.

It belongs to the major facilitator superfamily. LplT (TC 2.A.1.42) family.

The protein localises to the cell inner membrane. Its function is as follows. Catalyzes the facilitated diffusion of 2-acyl-glycero-3-phosphoethanolamine (2-acyl-GPE) into the cell. This chain is Lysophospholipid transporter LplT, found in Escherichia coli O8 (strain IAI1).